The sequence spans 578 residues: 2-succinyl-5-enolpyruvyl-6-hydroxy-3-cyclohexene-1-carboxylate synthase (578 aa).

The segment at leucine 186–proline 208 is disordered.

It belongs to the TPP enzyme family. MenD subfamily. In terms of assembly, homodimer. The cofactor is Mg(2+). Mn(2+) is required as a cofactor. Thiamine diphosphate serves as cofactor.

It catalyses the reaction isochorismate + 2-oxoglutarate + H(+) = 5-enolpyruvoyl-6-hydroxy-2-succinyl-cyclohex-3-ene-1-carboxylate + CO2. The protein operates within quinol/quinone metabolism; 1,4-dihydroxy-2-naphthoate biosynthesis; 1,4-dihydroxy-2-naphthoate from chorismate: step 2/7. It functions in the pathway cofactor biosynthesis; phylloquinone biosynthesis. Its function is as follows. Catalyzes the thiamine diphosphate-dependent decarboxylation of 2-oxoglutarate and the subsequent addition of the resulting succinic semialdehyde-thiamine pyrophosphate anion to isochorismate to yield 2-succinyl-5-enolpyruvyl-6-hydroxy-3-cyclohexene-1-carboxylate (SEPHCHC). The polypeptide is 2-succinyl-5-enolpyruvyl-6-hydroxy-3-cyclohexene-1-carboxylate synthase (Synechococcus sp. (strain WH7803)).